The following is a 704-amino-acid chain: Protein arginine N-methyltransferase 7 (704 aa).

2 SAM-dependent MTase PRMT-type domains span residues 14–356 and 366–704; these read ENTW…YSLW and SQPA…EKSE.

The protein belongs to the class I-like SAM-binding methyltransferase superfamily. Protein arginine N-methyltransferase family. PRMT7 subfamily.

Essential arginine methyltransferase that can both catalyze the formation of omega-N monomethylarginine (MMA) and symmetrical dimethylarginine (sDMA). Specifically mediates the symmetrical dimethylation of arginine residues in the small nuclear ribonucleoproteins SmD1 and SmD3. This Drosophila grimshawi (Hawaiian fruit fly) protein is Protein arginine N-methyltransferase 7 (Art7).